We begin with the raw amino-acid sequence, 125 residues long: Small ribosomal subunit protein eS6 (125 aa).

The protein belongs to the eukaryotic ribosomal protein eS6 family.

The protein is Small ribosomal subunit protein eS6 of Pyrococcus abyssi (strain GE5 / Orsay).